A 466-amino-acid chain; its full sequence is Ribulose bisphosphate carboxylase large chain (466 aa).

At Lys5 the chain carries N6,N6,N6-trimethyllysine. Positions 114 and 164 each coordinate substrate. Lys166 serves as the catalytic Proton acceptor. Lys168 contributes to the substrate binding site. Mg(2+) contacts are provided by Lys192, Asp194, and Glu195. Lys192 carries the N6-carboxylysine modification. The Proton acceptor role is filled by His285. Residues Arg286, His318, and Ser370 each contribute to the substrate site.

Belongs to the RuBisCO large chain family. Type I subfamily. In terms of assembly, heterohexadecamer of 8 large chains and 8 small chains; disulfide-linked. The disulfide link is formed within the large subunit homodimers. Mg(2+) is required as a cofactor. Post-translationally, the disulfide bond which can form in the large chain dimeric partners within the hexadecamer appears to be associated with oxidative stress and protein turnover.

The protein resides in the plastid. It localises to the chloroplast. The enzyme catalyses 2 (2R)-3-phosphoglycerate + 2 H(+) = D-ribulose 1,5-bisphosphate + CO2 + H2O. It catalyses the reaction D-ribulose 1,5-bisphosphate + O2 = 2-phosphoglycolate + (2R)-3-phosphoglycerate + 2 H(+). RuBisCO catalyzes two reactions: the carboxylation of D-ribulose 1,5-bisphosphate, the primary event in carbon dioxide fixation, as well as the oxidative fragmentation of the pentose substrate in the photorespiration process. Both reactions occur simultaneously and in competition at the same active site. The protein is Ribulose bisphosphate carboxylase large chain of Drosera binata (Fork-leaved sundew).